Here is a 345-residue protein sequence, read N- to C-terminus: MGRFKNNKKSRVIGKPIAKKNQEDVSHVTGDKIPKSFVFSRMKLAGPVKQLQMDLRKLMLPYTALSLKEKKRNTLRDFLNVSGPMGVTHFLMLSKTASSLSLRVARTPQGPTLTFKIHQYSLASDIAQSQLRPRCPQDLFKSPPLIVLSGFGSQELHLKLATIMFQNIFPAIDINTVKLSTCQRLVLLNYNKDTKLIDFRHYSIRLQPVGVSRRIRKFVQNHQVPDLRNLQDVSDFVTKAGYGSESEGDEEAATVTLSSDLGRVNKGATKSAVKLQEIGPRMTMQLVKVEEGLCTGGIIFSEYDVDGKKEKLKKKQDEEEEEDSEEEGEEGSEEDGEDMDEDFED.

The 262-residue stretch at 34–295 (PKSFVFSRMK…LVKVEEGLCT (262 aa)) folds into the Brix domain. A coiled-coil region spans residues 307–329 (GKKEKLKKKQDEEEEEDSEEEGE). Residues 308–345 (KKEKLKKKQDEEEEEDSEEEGEEGSEEDGEDMDEDFED) are disordered. Residues 318 to 345 (EEEEEDSEEEGEEGSEEDGEDMDEDFED) are compositionally biased toward acidic residues.

This sequence belongs to the PPAN family.

Functionally, may play a role in cell growth, differentiation and cell cycle progression. This chain is Peter Pan-like protein (PPAN), found in Arabidopsis thaliana (Mouse-ear cress).